The following is a 147-amino-acid chain: Large ribosomal subunit protein uL15 (147 aa).

The disordered stretch occupies residues 1-59; it reads MKLYELKPAPGSKKNRKRVGRGESSGHGKTSTRGHKGQWARSGGGVRPGFEGGQMPLTR. Residues 42 to 52 are compositionally biased toward gly residues; it reads SGGGVRPGFEG.

The protein belongs to the universal ribosomal protein uL15 family. As to quaternary structure, part of the 50S ribosomal subunit.

In terms of biological role, binds to the 23S rRNA. This is Large ribosomal subunit protein uL15 from Caldicellulosiruptor bescii (strain ATCC BAA-1888 / DSM 6725 / KCTC 15123 / Z-1320) (Anaerocellum thermophilum).